The sequence spans 44 residues: Alpha-amylase inhibitor magnificamide (44 aa).

3 cysteine pairs are disulfide-bonded: Cys-6–Cys-38, Cys-16–Cys-33, and Cys-20–Cys-39. The tract at residues 7 to 10 (YIYH) is inhibitory motif.

This sequence belongs to the sea anemone alpha-amylase inhibitor family.

The protein resides in the secreted. In terms of biological role, mammalian alpha-amylase (AMY2A) inhibitor. The recombinant peptide inhibits porcine pancreatic (Ki=0.17 nM) and human saliva alpha-amylases (Ki=7.7 nM). It does not show antimicrobial (tested on fungi and bacteria) or channel modulating activities (tested on 18 voltage-gated sodium and potassium channles). In Heteractis magnifica (Magnificent sea anemone), this protein is Alpha-amylase inhibitor magnificamide.